The sequence spans 533 residues: Subtilisin-like serine protease pepC (533 aa).

The N-terminal stretch at 1–16 (MKGILGLSLLPLLTAA) is a signal peptide. Residues 43–136 (SYIVVFKKHV…IERDSEVHTM (94 aa)) enclose the Inhibitor I9 domain. Positions 145-450 (PWGLARISHR…VGIYKRNELT (306 aa)) constitute a Peptidase S8 domain. Residues D181 and H213 each act as charge relay system in the active site. Residue N283 is glycosylated (N-linked (GlcNAc...) asparagine). C320 and C351 are oxidised to a cystine. S379 acts as the Charge relay system in catalysis. A glycan (N-linked (GlcNAc...) asparagine) is linked at N435. The span at 496–513 (KSCSPRSLVPSTARSRMP) shows a compositional bias: polar residues. A disordered region spans residues 496–519 (KSCSPRSLVPSTARSRMPSSHRSE).

Belongs to the peptidase S8 family.

This chain is Subtilisin-like serine protease pepC (pepC), found in Aspergillus niger.